An 827-amino-acid polypeptide reads, in one-letter code: Sporozoite surface protein 2 (827 aa).

Residues 1-22 (MKLLGNSKYIFVVLLLCISVFL) form the signal peptide. One can recognise a VWFA domain in the interval 43–228 (DIHILLDGSG…NMIKPFLTKV (186 aa)). The TSP type-1 domain occupies 235–281 (IAHCGKWEEWSECSTTCDEGRKIRRRQILHPGCVSEMTTPCKVRDCP). 3 disulfides stabilise this stretch: Cys-238–Cys-267, Cys-247–Cys-275, and Cys-251–Cys-280. The segment at 278–761 (RDCPQIPIPP…NKNQSKSNNG (484 aa)) is disordered. Residues 301–388 (EEPVNPNDPN…NNPNDPSNPN (88 aa)) are compositionally biased toward low complexity. A 29 X 3 AA tandem repeats region spans residues 306 to 392 (PNDPNDPNNP…DPSNPNNPNP (87 aa)). Positions 392-407 (PKKRNPKRRNPNKPKP) are enriched in basic residues. The 20 tandem tetra-/hexapeptide repeats stretch occupies residues 402–514 (PNKPKPNKPN…EPSNPNEPSN (113 aa)). Residues 408 to 464 (NKPNPNKPNPNEPSNPNKPNPNEPSNPNKPNPNEPSNPNKPNPNEPSNPNKPNPNEP) show a composition bias toward pro residues. The span at 465–567 (LNPNEPSNPN…KEPSNPNEPS (103 aa)) shows a compositional bias: low complexity. Repeat copies occupy residues 603–613 (PEESNPKEPIN) and 614–624 (PEESNPKEPIN). The interval 603–624 (PEESNPKEPINPEESNPKEPIN) is 2 X 11 AA tandem repeats. The span at 657–671 (KGNNIPSNLPENPSD) shows a compositional bias: polar residues. Residues 709-724 (YKGHEERIPKPHRSND) are compositionally biased toward basic and acidic residues. A helical transmembrane segment spans residues 764-787 (IAGGIIGGLAILGCAGVGYNFIAG).

The protein resides in the cell membrane. The sequence is that of Sporozoite surface protein 2 (SSP2) from Plasmodium yoelii yoelii.